Reading from the N-terminus, the 208-residue chain is FMN-dependent NADH:quinone oxidoreductase (208 aa).

FMN-binding positions include 17-19 (SNS), 99-102 (MWNL), and 143-146 (SRGG).

It belongs to the azoreductase type 1 family. Homodimer. Requires FMN as cofactor.

The enzyme catalyses 2 a quinone + NADH + H(+) = 2 a 1,4-benzosemiquinone + NAD(+). The catalysed reaction is N,N-dimethyl-1,4-phenylenediamine + anthranilate + 2 NAD(+) = 2-(4-dimethylaminophenyl)diazenylbenzoate + 2 NADH + 2 H(+). Its function is as follows. Quinone reductase that provides resistance to thiol-specific stress caused by electrophilic quinones. Functionally, also exhibits azoreductase activity. Catalyzes the reductive cleavage of the azo bond in aromatic azo compounds to the corresponding amines. This chain is FMN-dependent NADH:quinone oxidoreductase, found in Staphylococcus carnosus (strain TM300).